The primary structure comprises 466 residues: Histidine--tRNA ligase (466 aa).

This sequence belongs to the class-II aminoacyl-tRNA synthetase family. As to quaternary structure, homodimer.

The protein resides in the cytoplasm. It catalyses the reaction tRNA(His) + L-histidine + ATP = L-histidyl-tRNA(His) + AMP + diphosphate + H(+). This Xylella fastidiosa (strain M23) protein is Histidine--tRNA ligase.